We begin with the raw amino-acid sequence, 570 residues long: A-type ATP synthase subunit A (570 aa).

An ATP-binding site is contributed by 223–230 (GPFGSGKT).

This sequence belongs to the ATPase alpha/beta chains family. Has multiple subunits with at least A(3), B(3), C, D, E, F, H, I and proteolipid K(x).

The protein localises to the cell membrane. It carries out the reaction ATP + H2O + 4 H(+)(in) = ADP + phosphate + 5 H(+)(out). In terms of biological role, component of the A-type ATP synthase that produces ATP from ADP in the presence of a proton gradient across the membrane. The A chain is the catalytic subunit. The protein is A-type ATP synthase subunit A of Nanoarchaeum equitans (strain Kin4-M).